Here is a 145-residue protein sequence, read N- to C-terminus: D-aminoacyl-tRNA deacylase (145 aa).

The short motif at 137-138 (GP) is the Gly-cisPro motif, important for rejection of L-amino acids element.

The protein belongs to the DTD family. As to quaternary structure, homodimer.

The protein localises to the cytoplasm. It catalyses the reaction glycyl-tRNA(Ala) + H2O = tRNA(Ala) + glycine + H(+). The enzyme catalyses a D-aminoacyl-tRNA + H2O = a tRNA + a D-alpha-amino acid + H(+). In terms of biological role, an aminoacyl-tRNA editing enzyme that deacylates mischarged D-aminoacyl-tRNAs. Also deacylates mischarged glycyl-tRNA(Ala), protecting cells against glycine mischarging by AlaRS. Acts via tRNA-based rather than protein-based catalysis; rejects L-amino acids rather than detecting D-amino acids in the active site. By recycling D-aminoacyl-tRNA to D-amino acids and free tRNA molecules, this enzyme counteracts the toxicity associated with the formation of D-aminoacyl-tRNA entities in vivo and helps enforce protein L-homochirality. The sequence is that of D-aminoacyl-tRNA deacylase from Rhodococcus jostii (strain RHA1).